Reading from the N-terminus, the 370-residue chain is Protein Wnt-1 (370 aa).

The first 19 residues, 1 to 19 (MRVLALLLAVKAACVLLVS), serve as a signal peptide directing secretion. An N-linked (GlcNAc...) asparagine glycan is attached at asparagine 28. Cystine bridges form between cysteine 92/cysteine 103, cysteine 142/cysteine 150, cysteine 152/cysteine 169, cysteine 217/cysteine 231, and cysteine 219/cysteine 226. The O-palmitoleoyl serine; by PORCN moiety is linked to residue serine 223. The tract at residues 261–282 (GSNRASHRADPRHLEPENPAHK) is disordered. A compositionally biased stretch (basic and acidic residues) spans 267 to 280 (HRADPRHLEPENPA). Disulfide bonds link cysteine 299-cysteine 330, cysteine 315-cysteine 325, cysteine 329-cysteine 369, cysteine 345-cysteine 360, cysteine 347-cysteine 357, and cysteine 352-cysteine 353. Residue asparagine 316 is glycosylated (N-linked (GlcNAc...) asparagine). An N-linked (GlcNAc...) asparagine glycan is attached at asparagine 359.

It belongs to the Wnt family. Post-translationally, palmitoleoylation is required for efficient binding to frizzled receptors. Palmitoleoylation is necessary for proper trafficking to cell surface. Depalmitoleoylated by NOTUM, leading to inhibit Wnt signaling pathway.

The protein resides in the secreted. Its subcellular location is the extracellular space. It is found in the extracellular matrix. Ligand for members of the frizzled family of seven transmembrane receptors. Acts in the canonical Wnt signaling pathway by promoting beta-catenin-dependent transcriptional activation. Involved in neurogenesis. Performs a partially redundant function with wnt10b in the formation of the midbrain-hindbrain boundary (MHB) organizer. In the hindbrain, mediates lateral inhibition of boundary cell specification, probably via up-regulation of proneural and Delta gene expression in non-boundary cells; localized expression of wnt1 in boundary cells is maintained via rfng-mediated modulation of Notch activity. The protein is Protein Wnt-1 (wnt1) of Danio rerio (Zebrafish).